A 203-amino-acid chain; its full sequence is uncharacterized protein (203 aa).

Disordered stretches follow at residues 65–84 (LSLSEDEDEDESELEDSFDS) and 92–170 (SSSS…ETAL). 2 stretches are compositionally biased toward acidic residues: residues 68–82 (SEDEDEDESELEDSF) and 98–110 (SEEESEEEEEESL). The segment covering 111–122 (DSSFLVSASLSL) has biased composition (low complexity). Acidic residues predominate over residues 123–168 (SEDDEEEDSESEDEDEDEDSDSDSDSDSDSDEDEDEDEDSEEEEET). The chain crosses the membrane as a helical span at residues 182–202 (TSFLLPFTLVVLAILFYPAWV).

It localises to the membrane. This is an uncharacterized protein from Saccharomyces cerevisiae (strain ATCC 204508 / S288c) (Baker's yeast).